Consider the following 157-residue polypeptide: Transcription antitermination protein NusB (157 aa).

It belongs to the NusB family.

Involved in transcription antitermination. Required for transcription of ribosomal RNA (rRNA) genes. Binds specifically to the boxA antiterminator sequence of the ribosomal RNA (rrn) operons. The protein is Transcription antitermination protein NusB of Xylella fastidiosa (strain M12).